The following is a 223-amino-acid chain: Deoxyribose-phosphate aldolase (223 aa).

Asp89 (proton donor/acceptor) is an active-site residue. Lys152 functions as the Schiff-base intermediate with acetaldehyde in the catalytic mechanism. The active-site Proton donor/acceptor is the Lys181.

The protein belongs to the DeoC/FbaB aldolase family. DeoC type 1 subfamily.

The protein localises to the cytoplasm. The catalysed reaction is 2-deoxy-D-ribose 5-phosphate = D-glyceraldehyde 3-phosphate + acetaldehyde. It functions in the pathway carbohydrate degradation; 2-deoxy-D-ribose 1-phosphate degradation; D-glyceraldehyde 3-phosphate and acetaldehyde from 2-deoxy-alpha-D-ribose 1-phosphate: step 2/2. In terms of biological role, catalyzes a reversible aldol reaction between acetaldehyde and D-glyceraldehyde 3-phosphate to generate 2-deoxy-D-ribose 5-phosphate. The polypeptide is Deoxyribose-phosphate aldolase (Bacillus subtilis (strain 168)).